We begin with the raw amino-acid sequence, 349 residues long: uncharacterized protein (349 aa).

A signal peptide spans 1 to 16; that stretch reads MLFKISFLALIASALA. At 17 to 326 the chain is on the lumenal side; it reads MSINSPTNGD…SSSSSSSAAS (310 aa). 2 disordered regions span residues 115-190 and 243-322; these read ASSS…SSYR and TNGT…SSSS. 3 stretches are compositionally biased toward low complexity: residues 116 to 176, 243 to 278, and 289 to 322; these read SSSS…SSRT, TNGTNSTNSTSTTSHSLTKLPTSSKSLTTSKTTASG, and STNDTTNTTDDATNTTSDSSSSSSASASSSSSSS. A helical transmembrane segment spans residues 327-347; the sequence is LVSQPVGISAVIAFFAVALSL. Residues 348-349 are Cytoplasmic-facing; the sequence is TL.

It localises to the endoplasmic reticulum membrane. This is an uncharacterized protein from Schizosaccharomyces pombe (strain 972 / ATCC 24843) (Fission yeast).